An 838-amino-acid polypeptide reads, in one-letter code: Protein P (838 aa).

The interval 1–179 (MPLSYQHFRK…FCGSPYSWEQ (179 aa)) is terminal protein domain (TP). The spacer stretch occupies residues 180–341 (ELQHSQRHGD…YCLSHLVNLL (162 aa)). Positions 218 to 242 (LGLQPHQGPLATSQPGRSGSIRPRA) are disordered. The polymerase/reverse transcriptase domain (RT) stretch occupies residues 342–685 (EDWGPCVEHG…YLNLYPVARQ (344 aa)). Residues 352–595 (EHHIRIPRTP…YSLNFMGYVI (244 aa)) enclose the Reverse transcriptase domain. Mg(2+) contacts are provided by Asp424, Asp546, and Asp547.

This sequence belongs to the hepadnaviridae P protein family.

The catalysed reaction is DNA(n) + a 2'-deoxyribonucleoside 5'-triphosphate = DNA(n+1) + diphosphate. It carries out the reaction Endonucleolytic cleavage to 5'-phosphomonoester.. Its activity is regulated as follows. Activated by host HSP70 and HSP40 in vitro to be able to bind the epsilon loop of the pgRNA. Because deletion of the RNase H region renders the protein partly chaperone-independent, the chaperones may be needed indirectly to relieve occlusion of the RNA-binding site by this domain. Inhibited by several reverse-transcriptase inhibitors: Lamivudine, Adefovir and Entecavir. Its function is as follows. Multifunctional enzyme that converts the viral RNA genome into dsDNA in viral cytoplasmic capsids. This enzyme displays a DNA polymerase activity that can copy either DNA or RNA templates, and a ribonuclease H (RNase H) activity that cleaves the RNA strand of RNA-DNA heteroduplexes in a partially processive 3'- to 5'-endonucleasic mode. Neo-synthesized pregenomic RNA (pgRNA) are encapsidated together with the P protein, and reverse-transcribed inside the nucleocapsid. Initiation of reverse-transcription occurs first by binding the epsilon loop on the pgRNA genome, and is initiated by protein priming, thereby the 5'-end of (-)DNA is covalently linked to P protein. Partial (+)DNA is synthesized from the (-)DNA template and generates the relaxed circular DNA (RC-DNA) genome. After budding and infection, the RC-DNA migrates in the nucleus, and is converted into a plasmid-like covalently closed circular DNA (cccDNA). The activity of P protein does not seem to be necessary for cccDNA generation, and is presumably released from (+)DNA by host nuclear DNA repair machinery. This Homo sapiens (Human) protein is Protein P.